The primary structure comprises 324 residues: MADKLTDDQITEYRESFRLFDKNGDGSITKKELGTMMRSIGEKPTKADLQDLMNEADLDGDGTIDFPEFLCVMAKNQGHDQAPRHTKKTMADKLTDDQITEYRESFRLFDKNGDGSITKKELRTVMFSLGKNRTKADLQDMMNEVDLDGDGTIDFPEFLYLMAKNQGHDQAPRHTKKTMVDYQLTDDQILEFREAFRVFDKNGDGYITVNELRTTMRSLGETQTKAELQDMINEADADGDGTISFSEFVCVMTGKMIDTQSKKETYRVVNQGQGQVQRHTRNDRAGGTNWERDIAVGVASNIIASPISDFMKDRFKDLFEALLS.

EF-hand domains follow at residues 8 to 43, 44 to 79, 97 to 132, 133 to 168, 187 to 222, and 223 to 258; these read DQITEYRESFRLFDKNGDGSITKKELGTMMRSIGEK, PTKADLQDLMNEADLDGDGTIDFPEFLCVMAKNQGH, DQITEYRESFRLFDKNGDGSITKKELRTVMFSLGKN, RTKADLQDMMNEVDLDGDGTIDFPEFLYLMAKNQGH, DQILEFREAFRVFDKNGDGYITVNELRTTMRSLGET, and QTKAELQDMINEADADGDGTISFSEFVCVMTGKMID. Residues Asp-21, Asn-23, Asp-25, Ser-27, Glu-32, Asp-57, Asp-59, Asp-61, Thr-63, Glu-68, Asp-110, Asn-112, Asp-114, Ser-116, Glu-121, Asp-146, Asp-148, Asp-150, Thr-152, Glu-157, Asp-200, Asn-202, Asp-204, Tyr-206, Glu-211, Asp-236, Asp-238, Asp-240, Thr-242, and Glu-247 each contribute to the Ca(2+) site.

It belongs to the calmodulin family. Interacts with PID. Binds to ABCG36.

Functionally, potential calcium sensor that binds calcium in vitro. This is Calmodulin-like protein 12 from Arabidopsis thaliana (Mouse-ear cress).